Consider the following 409-residue polypeptide: Phosphoglycerate kinase (409 aa).

Residues 22-24 (DLN), Arg-37, 60-63 (HLSR), Arg-122, and Arg-164 contribute to the substrate site. ATP-binding positions include Lys-215, Glu-338, and 365–368 (GGDS).

It belongs to the phosphoglycerate kinase family. As to quaternary structure, monomer.

The protein localises to the cytoplasm. It catalyses the reaction (2R)-3-phosphoglycerate + ATP = (2R)-3-phospho-glyceroyl phosphate + ADP. The protein operates within carbohydrate degradation; glycolysis; pyruvate from D-glyceraldehyde 3-phosphate: step 2/5. The chain is Phosphoglycerate kinase (pgk) from Mycoplasma pneumoniae (strain ATCC 29342 / M129 / Subtype 1) (Mycoplasmoides pneumoniae).